Reading from the N-terminus, the 352-residue chain is SKP1-like protein 20 (352 aa).

The interval 108-167 is interaction with the F-box domain of F-box proteins; sequence TSAADSLQLKPLVDLTSRALARIIEGKNPEEIREIFHLPDDLTEEEKLEPLKNSMDDPRI. Disordered regions lie at residues 214–251 and 267–288; these read KAVK…RSKQ and LLSA…DIDD. The span at 216–230 shows a compositional bias: basic residues; sequence VKMSKGKKKKKKKKD. Positions 239–249 are enriched in basic and acidic residues; that stretch reads IHDKESHDLRS.

This sequence belongs to the SKP1 family. As to quaternary structure, part of a SCF (SKP1-cullin-F-box) protein ligase complex. As to expression, expressed in young seedlings, roots, leaves, floral stems, inflorescences, and siliques.

Its subcellular location is the nucleus. The protein operates within protein modification; protein ubiquitination. Involved in ubiquitination and subsequent proteasomal degradation of target proteins. Together with CUL1, RBX1 and a F-box protein, it forms a SCF E3 ubiquitin ligase complex. The functional specificity of this complex depends on the type of F-box protein. In the SCF complex, it serves as an adapter that links the F-box protein to CUL1. This chain is SKP1-like protein 20 (ASK20), found in Arabidopsis thaliana (Mouse-ear cress).